We begin with the raw amino-acid sequence, 690 residues long: Protein arginine N-methyltransferase 7 (690 aa).

SAM-dependent MTase PRMT-type domains follow at residues 14-357 and 366-690; these read QNSW…YSLW and TKSV…QKKL.

It belongs to the class I-like SAM-binding methyltransferase superfamily. Protein arginine N-methyltransferase family. PRMT7 subfamily.

Essential arginine methyltransferase that can both catalyze the formation of omega-N monomethylarginine (MMA) and symmetrical dimethylarginine (sDMA). Specifically mediates the symmetrical dimethylation of arginine residues in the small nuclear ribonucleoproteins SmD1 and SmD3. This is Protein arginine N-methyltransferase 7 (Art7) from Drosophila yakuba (Fruit fly).